The primary structure comprises 454 residues: SSLLSIPSLSLQYNDKLKVGGNSLRFSKEQSNTFSNAKSSCRISMVAAVNVSRFEGIPMAPPDPILGVSEAFRADTSDAKLNLGVGAYRTEELQPYVLKVVNKAENLMLERGQNKEYLAIEGLAAFNKATAELLLGADNPAIKQQRVATVQGLSGTGSLRLGAALIERYFPGAKVLISAPTWGNHKNIFNDARVPWSEYRYYDPKTVGLDFEGMIEDIKAAPEGTFVLLHGCAHNPTGIDPTPEQWEKIADVIQEKNHIPFFDVAYQGFASGSLDEDAASVRLFVARGLEVLVAQSYSKNLGLYAERIGAINVISSSPESAARVKSQLKRIARPMYSNPPVHGARIVADIVGNPALFDEWKVEMEMMAGRIKNVRQQLYDSISSKDKSGKDWSFILKQIGMFSYTGLNKNQSDNMTNKWHVYMTKDGRISLAGLSLAKCEYLADAIIDSFHYVS.

The N-terminal 49 residues, 1–49 (SSLLSIPSLSLQYNDKLKVGGNSLRFSKEQSNTFSNAKSSCRISMVAAV), are a transit peptide targeting the mitochondrion. G86, W182, and N235 together coordinate L-aspartate. K299 is subject to N6-(pyridoxal phosphate)lysine. R428 serves as a coordination point for L-aspartate.

Belongs to the class-I pyridoxal-phosphate-dependent aminotransferase family. As to quaternary structure, homodimer. Requires pyridoxal 5'-phosphate as cofactor.

Its subcellular location is the mitochondrion matrix. It carries out the reaction L-aspartate + 2-oxoglutarate = oxaloacetate + L-glutamate. Functionally, important for the metabolism of amino acids and Krebs-cycle related organic acids. In plants, it is involved in nitrogen metabolism and in aspects of carbon and energy metabolism. This chain is Aspartate aminotransferase P2, mitochondrial, found in Lupinus angustifolius (Narrow-leaved blue lupine).